A 276-amino-acid chain; its full sequence is Rhomboid protease GlpG (276 aa).

Transmembrane regions (helical) follow at residues 94–114, 142–162, 169–189, 192–212, 229–249, and 250–270; these read GPVTWVMMIACVVVFIAMQIL, ALMHFSLMHILFNLLWWWYLG, LGSGKLIVITLISALLSGYVQ, FSGPWFGGLSGVVYALMGYVW, LIIFALIWIVAGWFDLFGMSM, and ANGAHIAGLAVGLAMAFVDSL. The active-site Nucleophile is the Ser-201. His-254 is an active-site residue.

It belongs to the peptidase S54 family.

The protein resides in the cell inner membrane. It catalyses the reaction Cleaves type-1 transmembrane domains using a catalytic dyad composed of serine and histidine that are contributed by different transmembrane domains.. Functionally, rhomboid-type serine protease that catalyzes intramembrane proteolysis. In Escherichia coli O45:K1 (strain S88 / ExPEC), this protein is Rhomboid protease GlpG.